The chain runs to 171 residues: MAEKRNIFLVGPMGAGKSTIGRHLAQMLHLEFHDSDQEIEQRTGADIAWVFDVEGEEGFRRREAQVIADLSEKQGIVLATGGGSVQSKDIRNHLSARGIVVYLETTIDKQVARTQRDKRRPLLQVDDPREVLESLAEIRNPLYEEIADVIVKTDDQSAKIVANQIIEKLGF.

14 to 19 (GAGKST) serves as a coordination point for ATP. Mg(2+) is bound at residue Ser18. Substrate is bound by residues Asp36, Arg60, and Gly82. Arg120 provides a ligand contact to ATP. Arg139 provides a ligand contact to substrate. Position 156 (Gln156) interacts with ATP.

It belongs to the shikimate kinase family. In terms of assembly, monomer. Mg(2+) serves as cofactor.

The protein localises to the cytoplasm. The enzyme catalyses shikimate + ATP = 3-phosphoshikimate + ADP + H(+). Its pathway is metabolic intermediate biosynthesis; chorismate biosynthesis; chorismate from D-erythrose 4-phosphate and phosphoenolpyruvate: step 5/7. Its function is as follows. Catalyzes the specific phosphorylation of the 3-hydroxyl group of shikimic acid using ATP as a cosubstrate. The polypeptide is Shikimate kinase (Shewanella putrefaciens (strain CN-32 / ATCC BAA-453)).